A 37-amino-acid polypeptide reads, in one-letter code: Large ribosomal subunit protein bL36c (37 aa).

Belongs to the bacterial ribosomal protein bL36 family.

The protein localises to the plastid. The protein resides in the chloroplast. This is Large ribosomal subunit protein bL36c from Oltmannsiellopsis viridis (Marine flagellate).